The chain runs to 713 residues: Glutamine--fructose-6-phosphate aminotransferase [isomerizing] (713 aa).

The For GATase activity role is filled by Cys-2. In terms of domain architecture, Glutamine amidotransferase type-2 spans Cys-2 to Gly-316. 2 SIS domains span residues Trp-389–Ser-528 and Cys-561–Pro-703.

As to quaternary structure, homotetramer.

It catalyses the reaction D-fructose 6-phosphate + L-glutamine = D-glucosamine 6-phosphate + L-glutamate. It participates in nucleotide-sugar biosynthesis; UDP-N-acetyl-alpha-D-glucosamine biosynthesis; alpha-D-glucosamine 6-phosphate from D-fructose 6-phosphate: step 1/1. Its function is as follows. Involved in amino sugar synthesis (formation of chitin, supplies the amino sugars of asparagine-linked oligosaccharides of glycoproteins). The protein is Glutamine--fructose-6-phosphate aminotransferase [isomerizing] (GFA1) of Candida albicans (strain SC5314 / ATCC MYA-2876) (Yeast).